The chain runs to 287 residues: MARRFGVVAAHGKPEAVELADRIQRWLAAHQCQIANEEALPVVWPELDAIIAIGGDGLIMRVAHHYPDVPILGINVGRVGFLALAEREGWERALHDLVHDRYHVQEGPTLAVQLERGRSVLVDAWAINDVVVRAGYQLIEVELYIDGQFVNTYPGDGMIVATPQGSTAYCMAAGGPVLTAGVHGFAVTPICPHSPIRIALVVPEQATIEQVYVSDREARLIIDGEPVASLERGDLVRVRRGKQAFRLVVLPGTNFYEAFRSKFNFQIRPEAQPSRRTRNADTPSGAR.

Aspartate 56 acts as the Proton acceptor in catalysis. NAD(+) is bound by residues 56 to 57, arginine 61, 128 to 129, and aspartate 156; these read DG and ND.

This sequence belongs to the NAD kinase family. A divalent metal cation is required as a cofactor.

It localises to the cytoplasm. It carries out the reaction NAD(+) + ATP = ADP + NADP(+) + H(+). In terms of biological role, involved in the regulation of the intracellular balance of NAD and NADP, and is a key enzyme in the biosynthesis of NADP. Catalyzes specifically the phosphorylation on 2'-hydroxyl of the adenosine moiety of NAD to yield NADP. In Thermomicrobium roseum (strain ATCC 27502 / DSM 5159 / P-2), this protein is NAD kinase.